The following is an 89-amino-acid chain: Sec-independent protein translocase protein TatA (89 aa).

Residues 1–21 traverse the membrane as a helical segment; sequence MGGISIWQLLIIALIVVLLFG. Positions 47 to 61 are enriched in basic and acidic residues; that stretch reads EEKKALEENATDKPA. A disordered region spans residues 47–89; it reads EEKKALEENATDKPAADTAKVTETAKVAETAEKKAESKGKEQA. Residues 62-74 show a composition bias toward low complexity; it reads ADTAKVTETAKVA. Positions 75-89 are enriched in basic and acidic residues; sequence ETAEKKAESKGKEQA.

Belongs to the TatA/E family. In terms of assembly, the Tat system comprises two distinct complexes: a TatABC complex, containing multiple copies of TatA, TatB and TatC subunits, and a separate TatA complex, containing only TatA subunits. Substrates initially bind to the TatABC complex, which probably triggers association of the separate TatA complex to form the active translocon.

Its subcellular location is the cell inner membrane. Part of the twin-arginine translocation (Tat) system that transports large folded proteins containing a characteristic twin-arginine motif in their signal peptide across membranes. TatA could form the protein-conducting channel of the Tat system. The chain is Sec-independent protein translocase protein TatA from Shewanella pealeana (strain ATCC 700345 / ANG-SQ1).